The sequence spans 171 residues: Homeobox protein engrailed-1-B (171 aa).

2 disordered regions span residues 1–41 (EDPG…NAAP) and 60–86 (YSDR…KRPR). The segment covering 15–29 (PDSDTPSDSSKGSDS) has biased composition (low complexity). The homeobox DNA-binding region spans 82 to 141 (DKRPRTAFTAEQLQRLKAEFQANRYITEQRRQTLAQELSLNESQIKIWFQNKRAKIKKAS).

Belongs to the engrailed homeobox family.

It localises to the nucleus. Functionally, required for proper formation of the apical ectodermal ridge and correct dorsal-ventral patterning in the limb. This is Homeobox protein engrailed-1-B (en1-b) from Xenopus laevis (African clawed frog).